Here is a 162-residue protein sequence, read N- to C-terminus: NADH-quinone oxidoreductase subunit I 1 (162 aa).

4Fe-4S ferredoxin-type domains lie at 44–74 and 90–119; these read LRTYENGLEMCVGCELCQVACPAAAITVQAA and YKYQVDLLRCIFCGMCEEACPTDCLHLTQE. Residues C54, C57, C60, C64, C99, C102, C105, and C109 each coordinate [4Fe-4S] cluster.

It belongs to the complex I 23 kDa subunit family. In terms of assembly, NDH-1 is composed of 14 different subunits. Subunits NuoA, H, J, K, L, M, N constitute the membrane sector of the complex. [4Fe-4S] cluster serves as cofactor.

It localises to the cell membrane. It carries out the reaction a quinone + NADH + 5 H(+)(in) = a quinol + NAD(+) + 4 H(+)(out). NDH-1 shuttles electrons from NADH, via FMN and iron-sulfur (Fe-S) centers, to quinones in the respiratory chain. The immediate electron acceptor for the enzyme in this species is believed to be ubiquinone. Couples the redox reaction to proton translocation (for every two electrons transferred, four hydrogen ions are translocated across the cytoplasmic membrane), and thus conserves the redox energy in a proton gradient. This chain is NADH-quinone oxidoreductase subunit I 1, found in Symbiobacterium thermophilum (strain DSM 24528 / JCM 14929 / IAM 14863 / T).